A 726-amino-acid chain; its full sequence is Probable pre-mRNA-splicing factor ATP-dependent RNA helicase DEAH2 (726 aa).

A Helicase ATP-binding domain is found at Leu71–Pro240. Gly84–Thr91 provides a ligand contact to ATP. The DEAH box motif lies at Asp187 to His190. A Helicase C-terminal domain is found at Thr265 to Gly445.

Belongs to the DEAD box helicase family. DEAH subfamily. PRP43 sub-subfamily.

The catalysed reaction is ATP + H2O = ADP + phosphate + H(+). Functionally, may be involved in pre-mRNA splicing. The protein is Probable pre-mRNA-splicing factor ATP-dependent RNA helicase DEAH2 of Arabidopsis thaliana (Mouse-ear cress).